Reading from the N-terminus, the 436-residue chain is Nicotinate phosphoribosyltransferase (436 aa).

H231 carries the phosphohistidine; by autocatalysis modification.

This sequence belongs to the NAPRTase family. Post-translationally, transiently phosphorylated on a His residue during the reaction cycle. Phosphorylation strongly increases the affinity for substrates and increases the rate of nicotinate D-ribonucleotide production. Dephosphorylation regenerates the low-affinity form of the enzyme, leading to product release.

It carries out the reaction nicotinate + 5-phospho-alpha-D-ribose 1-diphosphate + ATP + H2O = nicotinate beta-D-ribonucleotide + ADP + phosphate + diphosphate. It functions in the pathway cofactor biosynthesis; NAD(+) biosynthesis; nicotinate D-ribonucleotide from nicotinate: step 1/1. Functionally, catalyzes the synthesis of beta-nicotinate D-ribonucleotide from nicotinate and 5-phospho-D-ribose 1-phosphate at the expense of ATP. This Vibrio parahaemolyticus serotype O3:K6 (strain RIMD 2210633) protein is Nicotinate phosphoribosyltransferase.